The following is a 318-amino-acid chain: Cuticle collagen dpy-7 (318 aa).

4 triple-helical region regions span residues 101–130 (GPIG…DGLD), 147–206 (GPPG…PGDD), 209–235 (GGTG…NGLP), and 240–278 (GPPG…PGGH). Positions 101-318 (GPIGPPGVSG…GYSGGGYGKK (218 aa)) are disordered. Over residues 187–204 (PQGEPGEQGEPGIKGPPG) the composition is skewed to low complexity. Pro residues-rich tracts occupy residues 216 to 228 (PPGP…PKGP) and 250 to 268 (PPGP…PFGP). Over residues 309–318 (GYSGGGYGKK) the composition is skewed to gly residues.

This sequence belongs to the cuticular collagen family. As to quaternary structure, collagen polypeptide chains are complexed within the cuticle by disulfide bonds and other types of covalent cross-links.

Nematode cuticles are composed largely of collagen-like proteins. The cuticle functions both as an exoskeleton and as a barrier to protect the worm from its environment. Mutations in dpy-7 affects the body shape. This Caenorhabditis elegans protein is Cuticle collagen dpy-7 (dpy-7).